The chain runs to 34 residues: MSDIN-like toxin proprotein 2 (34 aa).

A propeptide spanning residues 1-10 is cleaved from the precursor; the sequence is MSDINTARLP. Residues 11-20 constitute a cross-link (cyclopeptide (Phe-Pro)); the sequence is FYQFPDFKYP. Positions 21-34 are excised as a propeptide; it reads CVGDDIEMVLARGE.

Belongs to the MSDIN fungal toxin family. Post-translationally, processed by the macrocyclase-peptidase enzyme POPB to yield a toxic cyclic decapeptide. POPB first removes 10 residues from the N-terminus. Conformational trapping of the remaining peptide forces the enzyme to release this intermediate rather than proceed to macrocyclization. The enzyme rebinds the remaining peptide in a different conformation and catalyzes macrocyclization of the N-terminal 10 residues.

Probable toxin that belongs to the MSDIN-like toxin family responsible for a large number of food poisoning cases and deaths. The chain is MSDIN-like toxin proprotein 2 from Amanita bisporigera (Destroying angel).